The following is a 399-amino-acid chain: MLFLGSGELGKEVTIELMRLGAWVCAADSYAGAPAQQVAHEYRVLDMANADQLRALFDEIQPDIIVPEVEAIATSELAAAAARGAQVVPSAEIAAICMDRERLRVLAHEELGLPTTPYRFAGSLEELREGAQIVGYPCVVKPIMSSSGHGQSVVRSADAIDAAWTEAQEGRRAHDEGDVSRVIVEALAPLDYELTVLTVSSSAGIVTCAPIGQRQESGDYRESWQPATFTPDVLEQAQHIARTAVEGLVAKAQASGEKGWGVFGVELFVLTDGNVLFNEVSPRPHDTGMVTMASQRLSEFALHARAILGLPITQEHVALSIPEGTVAASHAIVVQGDGEAEFRNVAAALAEPGTDLRVFAKPEVHGHRRMAVALAVGGDEADARAKAGNVAESLDIAIV.

Residues 8 to 9 and E68 contribute to the N(1)-(5-phospho-beta-D-ribosyl)glycinamide site; that span reads EL. Residues R100, K141, 146 to 151, 185 to 188, and E193 contribute to the ATP site; these read SSGHGQ and EALA. Residues 105–308 enclose the ATP-grasp domain; sequence VLAHEELGLP…EFALHARAIL (204 aa). Residues E266 and E279 each contribute to the Mg(2+) site. N(1)-(5-phospho-beta-D-ribosyl)glycinamide contacts are provided by residues D286, K361, and 368-369; that span reads RR.

This sequence belongs to the PurK/PurT family. In terms of assembly, homodimer.

The catalysed reaction is N(1)-(5-phospho-beta-D-ribosyl)glycinamide + formate + ATP = N(2)-formyl-N(1)-(5-phospho-beta-D-ribosyl)glycinamide + ADP + phosphate + H(+). Its pathway is purine metabolism; IMP biosynthesis via de novo pathway; N(2)-formyl-N(1)-(5-phospho-D-ribosyl)glycinamide from N(1)-(5-phospho-D-ribosyl)glycinamide (formate route): step 1/1. In terms of biological role, involved in the de novo purine biosynthesis. Catalyzes the transfer of formate to 5-phospho-ribosyl-glycinamide (GAR), producing 5-phospho-ribosyl-N-formylglycinamide (FGAR). Formate is provided by PurU via hydrolysis of 10-formyl-tetrahydrofolate. This chain is Formate-dependent phosphoribosylglycinamide formyltransferase, found in Bifidobacterium adolescentis (strain ATCC 15703 / DSM 20083 / NCTC 11814 / E194a).